The sequence spans 205 residues: Octanoyltransferase (205 aa).

In terms of domain architecture, BPL/LPL catalytic spans 30 to 205 (NSADELVWLL…ILKKEFYKIF (176 aa)). Residues 68–75 (RGGKHTYH), 140–142 (AFG), and 153–155 (GIA) each bind substrate. The Acyl-thioester intermediate role is filled by Cys-171.

The protein belongs to the LipB family.

The protein resides in the cytoplasm. It carries out the reaction octanoyl-[ACP] + L-lysyl-[protein] = N(6)-octanoyl-L-lysyl-[protein] + holo-[ACP] + H(+). It functions in the pathway protein modification; protein lipoylation via endogenous pathway; protein N(6)-(lipoyl)lysine from octanoyl-[acyl-carrier-protein]: step 1/2. Catalyzes the transfer of endogenously produced octanoic acid from octanoyl-acyl-carrier-protein onto the lipoyl domains of lipoate-dependent enzymes. Lipoyl-ACP can also act as a substrate although octanoyl-ACP is likely to be the physiological substrate. The protein is Octanoyltransferase of Wolbachia pipientis wMel.